Here is a 132-residue protein sequence, read N- to C-terminus: Small ribosomal subunit protein uS8 (132 aa).

This sequence belongs to the universal ribosomal protein uS8 family. Part of the 30S ribosomal subunit. Contacts proteins S5 and S12.

Its function is as follows. One of the primary rRNA binding proteins, it binds directly to 16S rRNA central domain where it helps coordinate assembly of the platform of the 30S subunit. The chain is Small ribosomal subunit protein uS8 from Lactobacillus johnsonii (strain CNCM I-12250 / La1 / NCC 533).